We begin with the raw amino-acid sequence, 196 residues long: ATP-dependent Clp protease proteolytic subunit (196 aa).

The active-site Nucleophile is Ser97. His122 is a catalytic residue.

Belongs to the peptidase S14 family. As to quaternary structure, fourteen ClpP subunits assemble into 2 heptameric rings which stack back to back to give a disk-like structure with a central cavity, resembling the structure of eukaryotic proteasomes.

It localises to the cytoplasm. The catalysed reaction is Hydrolysis of proteins to small peptides in the presence of ATP and magnesium. alpha-casein is the usual test substrate. In the absence of ATP, only oligopeptides shorter than five residues are hydrolyzed (such as succinyl-Leu-Tyr-|-NHMec, and Leu-Tyr-Leu-|-Tyr-Trp, in which cleavage of the -Tyr-|-Leu- and -Tyr-|-Trp bonds also occurs).. In terms of biological role, cleaves peptides in various proteins in a process that requires ATP hydrolysis. Has a chymotrypsin-like activity. Plays a major role in the degradation of misfolded proteins. The protein is ATP-dependent Clp protease proteolytic subunit of Lacticaseibacillus paracasei (strain ATCC 334 / BCRC 17002 / CCUG 31169 / CIP 107868 / KCTC 3260 / NRRL B-441) (Lactobacillus paracasei).